The primary structure comprises 63 residues: Large ribosomal subunit protein uL29 (63 aa).

It belongs to the universal ribosomal protein uL29 family.

This Flavobacterium psychrophilum (strain ATCC 49511 / DSM 21280 / CIP 103535 / JIP02/86) protein is Large ribosomal subunit protein uL29.